The sequence spans 488 residues: MDLRALIGVIEIPDLKKFLPEFILLLLAFILFTLELFIKGKERRLVLNVVSYVGYFSVLMSLLIPWMYKGDTFYGNFTNDPLAVTVKIFAVLITLAILPFASSYFSAKKSFYGEFYYILAFTLLGVFVLASTYNLIILYVALELVSVGFYILTALLRGSTEAKEGAFKYLILGGLSIALASYGAAFMYIYSGSLDLREILTYQGKDIHYLVLGLVFFLIGLAVKIGAVPFHYWVPDAYQGAPTPVTALMASVGKLAFFIPLVRVMPLVQEKFSLVWTITVGVIAALTMLYGNLVALVQKDVKRLLAYSSIAHSGYIMAGAAVAKVIGMKAVIYFLVAYAVMSAGAFLVLALMEKNPEWQNYMENFYGLRFNAPYIAFAFFVYMVALLGVPPTVGFVGKALVFMALSFDKLWWLAFIMILSAAISTGYYIRLVVVMYMHEREKEIRSAPSHLGEKFSLFALTLASVLLGVLPSLVWFLIKQSAENLFTG.

14 consecutive transmembrane segments (helical) span residues 18-38 (FLPE…ELFI), 45-65 (LVLN…LLIP), 81-101 (PLAV…LPFA), 110-130 (SFYG…FVLA), 135-155 (LIIL…LTAL), 169-189 (YLIL…FMYI), 210-230 (LVLG…AVPF), 242-262 (PTPV…IPLV), 274-294 (LVWT…GNLV), 308-328 (SSIA…VIGM), 331-351 (VIYF…VLAL), 375-395 (IAFA…TVGF), 412-434 (WLAF…LVVV), and 458-478 (FALT…WFLI).

The protein belongs to the complex I subunit 2 family. NDH-1 is composed of 14 different subunits. Subunits NuoA, H, J, K, L, M, N constitute the membrane sector of the complex.

Its subcellular location is the cell inner membrane. It carries out the reaction a quinone + NADH + 5 H(+)(in) = a quinol + NAD(+) + 4 H(+)(out). In terms of biological role, NDH-1 shuttles electrons from NADH, via FMN and iron-sulfur (Fe-S) centers, to quinones in the respiratory chain. The immediate electron acceptor for the enzyme in this species is believed to be ubiquinone. Couples the redox reaction to proton translocation (for every two electrons transferred, four hydrogen ions are translocated across the cytoplasmic membrane), and thus conserves the redox energy in a proton gradient. This chain is NADH-quinone oxidoreductase subunit N 2, found in Aquifex aeolicus (strain VF5).